We begin with the raw amino-acid sequence, 150 residues long: Ribosome maturation factor RimP (150 aa).

It belongs to the RimP family.

Its subcellular location is the cytoplasm. In terms of biological role, required for maturation of 30S ribosomal subunits. The sequence is that of Ribosome maturation factor RimP from Salmonella dublin (strain CT_02021853).